A 279-amino-acid polypeptide reads, in one-letter code: 3-methyl-2-oxobutanoate hydroxymethyltransferase (279 aa).

Residues Asp43 and Asp82 each contribute to the Mg(2+) site. 3-methyl-2-oxobutanoate-binding positions include 43–44, Asp82, and Lys112; that span reads DS. Glu114 is a Mg(2+) binding site. Catalysis depends on Glu181, which acts as the Proton acceptor.

Belongs to the PanB family. Homodecamer; pentamer of dimers. Requires Mg(2+) as cofactor.

The protein localises to the cytoplasm. The enzyme catalyses 3-methyl-2-oxobutanoate + (6R)-5,10-methylene-5,6,7,8-tetrahydrofolate + H2O = 2-dehydropantoate + (6S)-5,6,7,8-tetrahydrofolate. The protein operates within cofactor biosynthesis; (R)-pantothenate biosynthesis; (R)-pantoate from 3-methyl-2-oxobutanoate: step 1/2. Its function is as follows. Catalyzes the reversible reaction in which hydroxymethyl group from 5,10-methylenetetrahydrofolate is transferred onto alpha-ketoisovalerate to form ketopantoate. In Geobacillus sp. (strain WCH70), this protein is 3-methyl-2-oxobutanoate hydroxymethyltransferase.